The chain runs to 214 residues: Holliday junction branch migration complex subunit RuvA (214 aa).

A domain I region spans residues 1–63 (MIASLSGTVE…EDALTLYGFA (63 aa)). The interval 64-142 (DRDEREVFEV…PTGEPVPGAE (79 aa)) is domain II. A flexible linker region spans residues 143-151 (AEASDEPAV). Residues 151 to 214 (VETVWHADVV…GMAGAVRGGR (64 aa)) are domain III.

It belongs to the RuvA family. Homotetramer. Forms an RuvA(8)-RuvB(12)-Holliday junction (HJ) complex. HJ DNA is sandwiched between 2 RuvA tetramers; dsDNA enters through RuvA and exits via RuvB. An RuvB hexamer assembles on each DNA strand where it exits the tetramer. Each RuvB hexamer is contacted by two RuvA subunits (via domain III) on 2 adjacent RuvB subunits; this complex drives branch migration. In the full resolvosome a probable DNA-RuvA(4)-RuvB(12)-RuvC(2) complex forms which resolves the HJ.

The protein localises to the cytoplasm. Functionally, the RuvA-RuvB-RuvC complex processes Holliday junction (HJ) DNA during genetic recombination and DNA repair, while the RuvA-RuvB complex plays an important role in the rescue of blocked DNA replication forks via replication fork reversal (RFR). RuvA specifically binds to HJ cruciform DNA, conferring on it an open structure. The RuvB hexamer acts as an ATP-dependent pump, pulling dsDNA into and through the RuvAB complex. HJ branch migration allows RuvC to scan DNA until it finds its consensus sequence, where it cleaves and resolves the cruciform DNA. This Micrococcus luteus (strain ATCC 4698 / DSM 20030 / JCM 1464 / CCM 169 / CCUG 5858 / IAM 1056 / NBRC 3333 / NCIMB 9278 / NCTC 2665 / VKM Ac-2230) (Micrococcus lysodeikticus) protein is Holliday junction branch migration complex subunit RuvA.